Reading from the N-terminus, the 443-residue chain is D-lactate dehydrogenase (443 aa).

The Extracellular segment spans residues 1–182 (MSWIDELSKI…GGKTIKNSSG (182 aa)). Residues 32–209 (RAAENFVVVK…TKATIRLFPQ (178 aa)) form the FAD-binding PCMH-type domain. A helical transmembrane segment spans residues 183-203 (YSLLHLLVGSEGTLAVITKAT). Residues 204–383 (IRLFPQMRDM…WEKSYFEFRK (180 aa)) lie on the Cytoplasmic side of the membrane. Residues 384–404 (SLLSLAVSLGGVISGEHGIGA) traverse the membrane as a helical segment. Topologically, residues 405–443 (VKLSELEELFPEQFELMRQIKLLFDPKNILNPGKVVRKL) are extracellular.

It belongs to the FAD-binding oxidoreductase/transferase type 4 family. Requires FAD as cofactor. Zn(2+) is required as a cofactor.

The protein localises to the cell membrane. The enzyme catalyses (R)-lactate + A = pyruvate + AH2. Its function is as follows. Catalyzes the dehydrogenation of (R)-lactate (D-lactate) to pyruvate. Is likely involved in the utilization of D-lactate as a sole source for both carbon and electrons for dissimilatory sulfate reduction. Cannot use L-lactate as substrate, and NAD(+), horse cytochrome c, methylene blue or dimethylnaphthoquinone as acceptors. Active in vitro with artificial electron acceptors such as 2,6-dichlorophenolindophenol (DCPIP); the physiological acceptor is not known, but potential acceptors include cytochromes or quinones. This is D-lactate dehydrogenase from Archaeoglobus fulgidus (strain ATCC 49558 / DSM 4304 / JCM 9628 / NBRC 100126 / VC-16).